Here is a 531-residue protein sequence, read N- to C-terminus: Pyruvate kinase (531 aa).

Residue R86 participates in substrate binding. N88, S90, D121, and T122 together coordinate K(+). 88–91 is an ATP binding site; sequence NFSH. 2 residues coordinate ATP: R128 and K211. Residue E277 coordinates Mg(2+). Positions 300, 301, and 333 each coordinate substrate. Residue D301 participates in Mg(2+) binding.

It belongs to the pyruvate kinase family. As to quaternary structure, homotetramer. The cofactor is Mg(2+). K(+) is required as a cofactor.

The enzyme catalyses pyruvate + ATP = phosphoenolpyruvate + ADP + H(+). It participates in carbohydrate degradation; glycolysis; pyruvate from D-glyceraldehyde 3-phosphate: step 5/5. The sequence is that of Pyruvate kinase (PYK) from Eimeria tenella (Coccidian parasite).